The chain runs to 183 residues: Peptide deformylase (183 aa).

The Fe cation site is built by Cys-111 and His-154. Glu-155 is an active-site residue. His-158 serves as a coordination point for Fe cation.

Fe(2+) is required as a cofactor.

It carries out the reaction N-terminal N-formyl-L-methionyl-[peptide] + H2O = N-terminal L-methionyl-[peptide] + formate. Functionally, removes the formyl group from the N-terminal Met of newly synthesized proteins. Requires at least a dipeptide for an efficient rate of reaction. N-terminal L-methionine is a prerequisite for activity but the enzyme has broad specificity at other positions. This Staphylococcus aureus protein is Peptide deformylase.